Reading from the N-terminus, the 171-residue chain is Homeobox protein engrailed-1-B (171 aa).

2 disordered regions span residues 1–41 (EDPG…NAAP) and 60–86 (YSDR…KRPR). A compositionally biased stretch (low complexity) spans 15–29 (PDSDTPSDSSKGSDS). The homeobox DNA-binding region spans 82–141 (DKRPRTAFTAEQLQRLKAEFQANRYITEQRRQTLAQELSLNESQIKIWFQNKRAKIKKAS).

Belongs to the engrailed homeobox family.

It is found in the nucleus. Functionally, required for proper formation of the apical ectodermal ridge and correct dorsal-ventral patterning in the limb. The sequence is that of Homeobox protein engrailed-1-B (en1-b) from Xenopus laevis (African clawed frog).